A 400-amino-acid polypeptide reads, in one-letter code: Queuine tRNA-ribosyltransferase (400 aa).

The active-site Proton acceptor is the Asp-93. Substrate is bound by residues 93–97 (DSGGF), Asp-166, and Gly-247. The RNA binding stretch occupies residues 277 to 283 (GIGDVDD). Catalysis depends on Asp-296, which acts as the Nucleophile. An RNA binding; important for wobble base 34 recognition region spans residues 301 to 305 (TRLGR). The Zn(2+) site is built by Cys-338, Cys-340, Cys-343, and His-369.

Belongs to the queuine tRNA-ribosyltransferase family. In terms of assembly, homodimer. Within each dimer, one monomer is responsible for RNA recognition and catalysis, while the other monomer binds to the replacement base PreQ1. It depends on Zn(2+) as a cofactor.

It catalyses the reaction 7-aminomethyl-7-carbaguanine + guanosine(34) in tRNA = 7-aminomethyl-7-carbaguanosine(34) in tRNA + guanine. It functions in the pathway tRNA modification; tRNA-queuosine biosynthesis. Functionally, catalyzes the base-exchange of a guanine (G) residue with the queuine precursor 7-aminomethyl-7-deazaguanine (PreQ1) at position 34 (anticodon wobble position) in tRNAs with GU(N) anticodons (tRNA-Asp, -Asn, -His and -Tyr). Catalysis occurs through a double-displacement mechanism. The nucleophile active site attacks the C1' of nucleotide 34 to detach the guanine base from the RNA, forming a covalent enzyme-RNA intermediate. The proton acceptor active site deprotonates the incoming PreQ1, allowing a nucleophilic attack on the C1' of the ribose to form the product. After dissociation, two additional enzymatic reactions on the tRNA convert PreQ1 to queuine (Q), resulting in the hypermodified nucleoside queuosine (7-(((4,5-cis-dihydroxy-2-cyclopenten-1-yl)amino)methyl)-7-deazaguanosine). This Roseiflexus sp. (strain RS-1) protein is Queuine tRNA-ribosyltransferase.